A 403-amino-acid polypeptide reads, in one-letter code: Ribosomal RNA large subunit methyltransferase I (403 aa).

The PUA domain maps to 9–88; it reads YPRLILSKGR…ESIDIAFFTR (80 aa).

It belongs to the methyltransferase superfamily. RlmI family.

The protein localises to the cytoplasm. The enzyme catalyses cytidine(1962) in 23S rRNA + S-adenosyl-L-methionine = 5-methylcytidine(1962) in 23S rRNA + S-adenosyl-L-homocysteine + H(+). Its function is as follows. Specifically methylates the cytosine at position 1962 (m5C1962) of 23S rRNA. The chain is Ribosomal RNA large subunit methyltransferase I from Salmonella paratyphi C (strain RKS4594).